Here is a 279-residue protein sequence, read N- to C-terminus: H-2 class II histocompatibility antigen gamma chain (279 aa).

A disordered region spans residues 1-23 (MDDQRDLISNHEQLPILGNRPRE). Topologically, residues 1–29 (MDDQRDLISNHEQLPILGNRPREPERCSR) are cytoplasmic. A Phosphoserine modification is found at S9. The helical; Signal-anchor for type II membrane protein transmembrane segment at 30 to 55 (GALYTGVSVLVALLLAGQATTAYFLY) threads the bilayer. The Extracellular portion of the chain corresponds to 56–279 (QQQGRLDKLT…TRQELGQVTL (224 aa)). 2 N-linked (GlcNAc...) asparagine glycosylation sites follow: N113 and N119. One can recognise a Thyroglobulin type-1 domain in the interval 193 to 254 (LTKCQEEVSH…HTKSRGRHNC (62 aa)). 3 disulfide bridges follow: C196–C215, C226–C233, and C235–C254. An O-linked (Xyl...) (chondroitin sulfate) serine glycan is attached at S265.

As to quaternary structure, nonamer composed of three alpha/beta/gamma heterotrimers. Interacts with CD44; this complex is essential for the MIF-induced signaling cascade that results in B cell survival. In terms of assembly, interacts with the mature form of CTSL; the complex survive in neutral pH environment. Expressed in thymus and lymph noodes. Expressed by antigen-presenting cells (APCs). In terms of tissue distribution, expressed in thymus and lymph noodes.

It is found in the late endosome. Its subcellular location is the lysosome. The protein resides in the cell membrane. It localises to the endoplasmic reticulum membrane. The protein localises to the golgi apparatus. It is found in the trans-Golgi network. Its subcellular location is the endosome. The protein resides in the secreted. Functionally, plays a critical role in MHC class II antigen processing by stabilizing peptide-free class II alpha/beta heterodimers in a complex soon after their synthesis and directing transport of the complex from the endoplasmic reticulum to compartments where peptide loading of class II takes place. Enhance also the stimulation of T-cell responses through interaction with CD44. Stabilizes the conformation of mature CTSL by binding to its active site and serving as a chaperone to help maintain a pool of mature enzyme in endocytic compartments and extracellular space of antigen-presenting cells (APCs). In terms of biological role, binds to the peptide-binding site of MHC class II alpha/beta heterodimers forming an alpha-beta-CLIP complex, thereby preventing the loading of antigenic peptides to the MHC class II complex until its release by HLA-DM in the endosome. The protein is H-2 class II histocompatibility antigen gamma chain of Mus musculus (Mouse).